The following is a 387-amino-acid chain: Succinyl-diaminopimelate desuccinylase (387 aa).

H75 provides a ligand contact to Zn(2+). Residue D77 is part of the active site. D108 provides a ligand contact to Zn(2+). Residue E139 is the Proton acceptor of the active site. 3 residues coordinate Zn(2+): E140, E168, and H357.

Belongs to the peptidase M20A family. DapE subfamily. Homodimer. Zn(2+) is required as a cofactor. Requires Co(2+) as cofactor.

The enzyme catalyses N-succinyl-(2S,6S)-2,6-diaminopimelate + H2O = (2S,6S)-2,6-diaminopimelate + succinate. Its pathway is amino-acid biosynthesis; L-lysine biosynthesis via DAP pathway; LL-2,6-diaminopimelate from (S)-tetrahydrodipicolinate (succinylase route): step 3/3. Catalyzes the hydrolysis of N-succinyl-L,L-diaminopimelic acid (SDAP), forming succinate and LL-2,6-diaminopimelate (DAP), an intermediate involved in the bacterial biosynthesis of lysine and meso-diaminopimelic acid, an essential component of bacterial cell walls. In Caulobacter sp. (strain K31), this protein is Succinyl-diaminopimelate desuccinylase.